The chain runs to 50 residues: Large ribosomal subunit protein eL39 (50 aa).

A compositionally biased stretch (basic residues) spans 1–12 (MGKKSKASKKRL). 2 disordered regions span residues 1–20 (MGKK…RQNS) and 30–50 (TNRD…DTDE).

The protein belongs to the eukaryotic ribosomal protein eL39 family.

The sequence is that of Large ribosomal subunit protein eL39 (rpl39e) from Halobacterium salinarum (strain ATCC 700922 / JCM 11081 / NRC-1) (Halobacterium halobium).